We begin with the raw amino-acid sequence, 191 residues long: 3-hydroxyanthranilate 3,4-dioxygenase 2 (191 aa).

Position 48 (arginine 48) interacts with O2. The Fe cation site is built by histidine 52, glutamate 73, and histidine 111. Glutamate 73 is a substrate binding site. Substrate contacts are provided by arginine 115 and glutamate 125.

This sequence belongs to the 3-HAO family. Fe(2+) serves as cofactor.

Its subcellular location is the cytoplasm. The enzyme catalyses 3-hydroxyanthranilate + O2 = (2Z,4Z)-2-amino-3-carboxymuconate 6-semialdehyde. It participates in cofactor biosynthesis; NAD(+) biosynthesis; quinolinate from L-kynurenine: step 3/3. Catalyzes the oxidative ring opening of 3-hydroxyanthranilate to 2-amino-3-carboxymuconate semialdehyde, which spontaneously cyclizes to quinolinate. In Aspergillus clavatus (strain ATCC 1007 / CBS 513.65 / DSM 816 / NCTC 3887 / NRRL 1 / QM 1276 / 107), this protein is 3-hydroxyanthranilate 3,4-dioxygenase 2 (bna1-2).